A 314-amino-acid chain; its full sequence is Olfactory receptor 5P6 (314 aa).

The Extracellular portion of the chain corresponds to 1–28; sequence MAFQEDGNHTAVTEFVLFGLTDDPVLRV. N8 carries an N-linked (GlcNAc...) asparagine glycan. A helical membrane pass occupies residues 29 to 49; sequence ILFIIFLCIYLVTVSGNLSTI. Topologically, residues 50–57 are cytoplasmic; it reads LLIRVSSQ. The helical transmembrane segment at 58-78 threads the bilayer; sequence LHHPMYFFLSHLAFADIGYSS. At 79–102 the chain is on the extracellular side; the sequence is SVTPNMLVNFLVERHTISYIGCAI. A disulfide bridge connects residues C100 and C192. Residues 103-123 traverse the membrane as a helical segment; that stretch reads QLGSVVFFGSSECFILAAMAY. At 124-136 the chain is on the cytoplasmic side; sequence DRFMAICNPLLYS. Residues 137–157 traverse the membrane as a helical segment; that stretch reads TKMSTQVCVQLLLIAYIGGFL. Residues 158–199 lie on the Extracellular side of the membrane; sequence NTWSFTICFYSLVFCGPNGVNHFFCDFAPLIELSCSDVSVPA. The chain crosses the membrane as a helical span at residues 200 to 220; the sequence is TVPSFTAGSIIVVTVIVIAIS. At 221–240 the chain is on the cytoplasmic side; it reads YIYILITILKMHSTEGRQKA. A helical membrane pass occupies residues 241-261; that stretch reads FSTCTSHLTAVTLFYGTITFI. Over 262 to 274 the chain is Extracellular; the sequence is YVMPKSSFSTDQN. The helical transmembrane segment at 275 to 295 threads the bilayer; sequence KVVSVFYMVVIPMLNPLIYSL. Topologically, residues 296-314 are cytoplasmic; that stretch reads RNNEIKGALKRQIGRKIFS.

It belongs to the G-protein coupled receptor 1 family.

The protein localises to the cell membrane. Its function is as follows. Potential odorant receptor. The protein is Olfactory receptor 5P6 of Mus musculus (Mouse).